A 401-amino-acid polypeptide reads, in one-letter code: Lipid-A-disaccharide synthase (401 aa).

This sequence belongs to the LpxB family.

It carries out the reaction a lipid X + a UDP-2-N,3-O-bis[(3R)-3-hydroxyacyl]-alpha-D-glucosamine = a lipid A disaccharide + UDP + H(+). Its pathway is bacterial outer membrane biogenesis; LPS lipid A biosynthesis. Its function is as follows. Condensation of UDP-2,3-diacylglucosamine and 2,3-diacylglucosamine-1-phosphate to form lipid A disaccharide, a precursor of lipid A, a phosphorylated glycolipid that anchors the lipopolysaccharide to the outer membrane of the cell. The chain is Lipid-A-disaccharide synthase from Rhodospirillum centenum (strain ATCC 51521 / SW).